Reading from the N-terminus, the 60-residue chain is Large ribosomal subunit protein uL30 (60 aa).

Belongs to the universal ribosomal protein uL30 family. In terms of assembly, part of the 50S ribosomal subunit.

The sequence is that of Large ribosomal subunit protein uL30 from Mycobacteroides abscessus (strain ATCC 19977 / DSM 44196 / CCUG 20993 / CIP 104536 / JCM 13569 / NCTC 13031 / TMC 1543 / L948) (Mycobacterium abscessus).